The following is a 335-amino-acid chain: Probable pectinesterase 29 (335 aa).

A signal peptide spans 1-24; that stretch reads MGTHRIFIGLIALCCFCLPHLIEA. The N-linked (GlcNAc...) asparagine glycan is linked to Asn43. Asp166 (proton donor) is an active-site residue. Catalysis depends on Asp187, which acts as the Nucleophile. Positions 248 and 250 each coordinate substrate. N-linked (GlcNAc...) asparagine glycosylation is present at Asn262.

The protein belongs to the pectinesterase family. In terms of tissue distribution, expressed in flower buds.

It is found in the secreted. Its subcellular location is the cell wall. It catalyses the reaction [(1-&gt;4)-alpha-D-galacturonosyl methyl ester](n) + n H2O = [(1-&gt;4)-alpha-D-galacturonosyl](n) + n methanol + n H(+). The protein operates within glycan metabolism; pectin degradation; 2-dehydro-3-deoxy-D-gluconate from pectin: step 1/5. Acts in the modification of cell walls via demethylesterification of cell wall pectin. The protein is Probable pectinesterase 29 (PME29) of Arabidopsis thaliana (Mouse-ear cress).